A 207-amino-acid chain; its full sequence is 3-isopropylmalate dehydratase small subunit (207 aa).

This sequence belongs to the LeuD family. LeuD type 1 subfamily. Heterodimer of LeuC and LeuD.

The catalysed reaction is (2R,3S)-3-isopropylmalate = (2S)-2-isopropylmalate. It participates in amino-acid biosynthesis; L-leucine biosynthesis; L-leucine from 3-methyl-2-oxobutanoate: step 2/4. Functionally, catalyzes the isomerization between 2-isopropylmalate and 3-isopropylmalate, via the formation of 2-isopropylmaleate. The sequence is that of 3-isopropylmalate dehydratase small subunit (leuD) from Buchnera aphidicola subsp. Acyrthosiphon pisum (strain APS) (Acyrthosiphon pisum symbiotic bacterium).